The following is a 164-amino-acid chain: Crossover junction endodeoxyribonuclease RuvC (164 aa).

Catalysis depends on residues Asp-7, Glu-66, and Asp-138. Mg(2+) is bound by residues Asp-7, Glu-66, and Asp-138.

It belongs to the RuvC family. Homodimer which binds Holliday junction (HJ) DNA. The HJ becomes 2-fold symmetrical on binding to RuvC with unstacked arms; it has a different conformation from HJ DNA in complex with RuvA. In the full resolvosome a probable DNA-RuvA(4)-RuvB(12)-RuvC(2) complex forms which resolves the HJ. The cofactor is Mg(2+).

It is found in the cytoplasm. It carries out the reaction Endonucleolytic cleavage at a junction such as a reciprocal single-stranded crossover between two homologous DNA duplexes (Holliday junction).. Its function is as follows. The RuvA-RuvB-RuvC complex processes Holliday junction (HJ) DNA during genetic recombination and DNA repair. Endonuclease that resolves HJ intermediates. Cleaves cruciform DNA by making single-stranded nicks across the HJ at symmetrical positions within the homologous arms, yielding a 5'-phosphate and a 3'-hydroxyl group; requires a central core of homology in the junction. The consensus cleavage sequence is 5'-(A/T)TT(C/G)-3'. Cleavage occurs on the 3'-side of the TT dinucleotide at the point of strand exchange. HJ branch migration catalyzed by RuvA-RuvB allows RuvC to scan DNA until it finds its consensus sequence, where it cleaves and resolves the cruciform DNA. The chain is Crossover junction endodeoxyribonuclease RuvC from Paracoccus denitrificans (strain Pd 1222).